The sequence spans 1608 residues: Mitogen-activated protein kinase kinase kinase 4 (1608 aa).

The segment covering 1 to 23 has biased composition (low complexity); the sequence is MREAAAALVPPPAFAVTPAAAME. 2 disordered regions span residues 1 to 136 and 429 to 478; these read MREA…ENVE and IPSP…RQPI. The segment covering 24 to 37 has biased composition (pro residues); it reads EPPPPPPPPPPPPE. A compositionally biased stretch (acidic residues) spans 66-76; it reads SDLEDFSDETN. At Ser84 the chain carries Phosphoserine. The segment covering 91–101 has biased composition (basic residues); the sequence is QMKRMSTKHQR. A Phosphoserine modification is found at Ser431. Thr447 bears the Phosphothreonine mark. A phosphoserine mark is found at Ser456 and Ser457. Residues 456–466 are compositionally biased toward acidic residues; sequence SSTDESEEEQI. Thr458 is subject to Phosphothreonine. Phosphoserine occurs at positions 461, 481, and 499. Disordered regions lie at residues 1157–1190, 1202–1231, and 1244–1274; these read CHSD…GSPA, ASRP…SVPE, and FRSL…TRRS. Positions 1217–1230 are enriched in polar residues; the sequence is SISSAHDTRGSSVP. 2 positions are modified to phosphoserine: Ser1252 and Ser1274. The span at 1252 to 1261 shows a compositional bias: basic and acidic residues; it reads SPTEERDEPA. One can recognise a Protein kinase domain in the interval 1343 to 1601; the sequence is WQRGNKIGEG…ASQLLDHSFV (259 aa). ATP contacts are provided by residues 1349 to 1357 and Lys1372; that span reads IGEGQYGKV. Asp1463 (proton acceptor) is an active-site residue.

Belongs to the protein kinase superfamily. STE Ser/Thr protein kinase family. MAP kinase kinase kinase subfamily. Monomer and homodimer. Homodimerization enhances kinase activity. Interacts with TRAF4; this promotes homodimerization. Binds both upstream activators and downstream substrates in multimolecular complexes. Interacts with AXIN1 and DIXDC1; interaction with DIXDC1 prevents interaction with AXIN1. Interacts with GADD45 and MAP2K6. Interacts with ZFP36; this interaction enhances the association with SH3KBP1/CIN85. Interacts with SH3KBP1; this interaction enhances the association with ZFP36. Interacts with CDC42. Mg(2+) serves as cofactor. In terms of tissue distribution, expressed at high levels in heart, placenta, skeletal muscle and pancreas, and at lower levels in other tissues.

Its subcellular location is the cytoplasm. It is found in the perinuclear region. It catalyses the reaction L-seryl-[protein] + ATP = O-phospho-L-seryl-[protein] + ADP + H(+). The catalysed reaction is L-threonyl-[protein] + ATP = O-phospho-L-threonyl-[protein] + ADP + H(+). N-terminal autoinhibitory domain interacts with the C-terminal kinase domain, inhibiting kinase activity, and preventing interaction with its substrate, MAP2K6. The GADD45 proteins activate the kinase by binding to the N-terminal domain. Activated by phosphorylation on Thr-1505. Component of a protein kinase signal transduction cascade. Activates the CSBP2, P38 and JNK MAPK pathways, but not the ERK pathway. Specifically phosphorylates and activates MAP2K4 and MAP2K6. The chain is Mitogen-activated protein kinase kinase kinase 4 (MAP3K4) from Homo sapiens (Human).